We begin with the raw amino-acid sequence, 161 residues long: Lipoprotein signal peptidase (161 aa).

3 helical membrane passes run 4–24, 61–81, and 87–107; these read LLVV…WSKY, KMIF…YLLI, and SIWY…NFID. Residues D116 and D132 contribute to the active site. A helical membrane pass occupies residues 127 to 147; sequence IFNVADSTLVVGVICIFIYLI.

It belongs to the peptidase A8 family.

It localises to the cell membrane. It catalyses the reaction Release of signal peptides from bacterial membrane prolipoproteins. Hydrolyzes -Xaa-Yaa-Zaa-|-(S,diacylglyceryl)Cys-, in which Xaa is hydrophobic (preferably Leu), and Yaa (Ala or Ser) and Zaa (Gly or Ala) have small, neutral side chains.. The protein operates within protein modification; lipoprotein biosynthesis (signal peptide cleavage). Functionally, this protein specifically catalyzes the removal of signal peptides from prolipoproteins. This is Lipoprotein signal peptidase from Enterococcus faecalis (strain ATCC 700802 / V583).